The primary structure comprises 402 residues: Beta sliding clamp (402 aa).

The protein belongs to the beta sliding clamp family. As to quaternary structure, forms a ring-shaped head-to-tail homodimer around DNA which binds and tethers DNA polymerases and other proteins to the DNA. The DNA replisome complex has a single clamp-loading complex (3 tau and 1 each of delta, delta', psi and chi subunits) which binds 3 Pol III cores (1 core on the leading strand and 2 on the lagging strand) each with a beta sliding clamp dimer. Additional proteins in the replisome are other copies of gamma, psi and chi, Ssb, DNA helicase and RNA primase.

It is found in the cytoplasm. Its function is as follows. Confers DNA tethering and processivity to DNA polymerases and other proteins. Acts as a clamp, forming a ring around DNA (a reaction catalyzed by the clamp-loading complex) which diffuses in an ATP-independent manner freely and bidirectionally along dsDNA. Initially characterized for its ability to contact the catalytic subunit of DNA polymerase III (Pol III), a complex, multichain enzyme responsible for most of the replicative synthesis in bacteria; Pol III exhibits 3'-5' exonuclease proofreading activity. The beta chain is required for initiation of replication as well as for processivity of DNA replication. This Mycobacterium bovis (strain ATCC BAA-935 / AF2122/97) protein is Beta sliding clamp (dnaN).